The primary structure comprises 300 residues: NADH-cytochrome b5 reductase 1 (300 aa).

A helical membrane pass occupies residues 8–28; that stretch reads PLVVFATVATIIISFVTLYFF. The span at 34–45 shows a compositional bias: low complexity; it reads SSTTSSSSSSSS. A disordered region spans residues 34–54; sequence SSTTSSSSSSSSKSKKGSPAL. The FAD-binding FR-type domain occupies 57–160; the sequence is DKFQKFPLIS…RGPKGFFTYT (104 aa). FAD-binding positions include 140-155 and 166-198; these read AEKQVGDFVEIRGPKG and SLGLIAGGTGIAPMYQIITAIMNNPEDKTKVHL.

Belongs to the flavoprotein pyridine nucleotide cytochrome reductase family. Monomer. Component of the 2-(3-amino-3-carboxypropyl)histidine synthase complex composed of DPH1, DPH2, DPH3 and a NADH-dependent reductase, predominantly CBR1. FAD is required as a cofactor.

Its subcellular location is the mitochondrion outer membrane. The enzyme catalyses 2 Fe(III)-[cytochrome b5] + NADH = 2 Fe(II)-[cytochrome b5] + NAD(+) + H(+). It carries out the reaction 2 Fe(3+)-[Dph3] + NADH = 2 Fe(2+)-[Dph3] + NAD(+) + H(+). It functions in the pathway protein modification; peptidyl-diphthamide biosynthesis. Functionally, NADH-dependent reductase for DPH3 and cytochrome b5. Required for the first step of diphthamide biosynthesis, a post-translational modification of histidine which occurs in elongation factor 2. DPH1 and DPH2 transfer a 3-amino-3-carboxypropyl (ACP) group from S-adenosyl-L-methionine (SAM) to a histidine residue, the reaction is assisted by a reduction system comprising DPH3 and a NADH-dependent reductase, predominantly CBR1. By reducing DPH3, also involved in the formation of the tRNA wobble base modification mcm5s 2U (5-methoxycarbonylmethyl-2-thiouridine), mediated by the elongator complex. The cytochrome b5/NADH cytochrome b5 reductase electron transfer system supports the catalytic activity of several sterol biosynthetic enzymes. The polypeptide is NADH-cytochrome b5 reductase 1 (CBR1) (Lodderomyces elongisporus (strain ATCC 11503 / CBS 2605 / JCM 1781 / NBRC 1676 / NRRL YB-4239) (Yeast)).